We begin with the raw amino-acid sequence, 529 residues long: Bifunctional purine biosynthesis protein PurH (529 aa).

One can recognise an MGS-like domain in the interval 1 to 148 (MQQRRPIRRA…KNHKDVAIVV (148 aa)).

The protein belongs to the PurH family.

The catalysed reaction is (6R)-10-formyltetrahydrofolate + 5-amino-1-(5-phospho-beta-D-ribosyl)imidazole-4-carboxamide = 5-formamido-1-(5-phospho-D-ribosyl)imidazole-4-carboxamide + (6S)-5,6,7,8-tetrahydrofolate. The enzyme catalyses IMP + H2O = 5-formamido-1-(5-phospho-D-ribosyl)imidazole-4-carboxamide. The protein operates within purine metabolism; IMP biosynthesis via de novo pathway; 5-formamido-1-(5-phospho-D-ribosyl)imidazole-4-carboxamide from 5-amino-1-(5-phospho-D-ribosyl)imidazole-4-carboxamide (10-formyl THF route): step 1/1. It functions in the pathway purine metabolism; IMP biosynthesis via de novo pathway; IMP from 5-formamido-1-(5-phospho-D-ribosyl)imidazole-4-carboxamide: step 1/1. This is Bifunctional purine biosynthesis protein PurH from Yersinia enterocolitica serotype O:8 / biotype 1B (strain NCTC 13174 / 8081).